Here is a 952-residue protein sequence, read N- to C-terminus: Isoleucine--tRNA ligase (952 aa).

The 'HIGH' region motif lies at 60–70 (PYANGSLHIGH). Glu562 serves as a coordination point for L-isoleucyl-5'-AMP. A 'KMSKS' region motif is present at residues 603-607 (KMSKS). Position 606 (Lys606) interacts with ATP. Positions 921, 924, 941, and 944 each coordinate Zn(2+).

This sequence belongs to the class-I aminoacyl-tRNA synthetase family. IleS type 1 subfamily. As to quaternary structure, monomer. Requires Zn(2+) as cofactor.

The protein localises to the cytoplasm. The catalysed reaction is tRNA(Ile) + L-isoleucine + ATP = L-isoleucyl-tRNA(Ile) + AMP + diphosphate. Functionally, catalyzes the attachment of isoleucine to tRNA(Ile). As IleRS can inadvertently accommodate and process structurally similar amino acids such as valine, to avoid such errors it has two additional distinct tRNA(Ile)-dependent editing activities. One activity is designated as 'pretransfer' editing and involves the hydrolysis of activated Val-AMP. The other activity is designated 'posttransfer' editing and involves deacylation of mischarged Val-tRNA(Ile). In Microcystis aeruginosa (strain NIES-843 / IAM M-2473), this protein is Isoleucine--tRNA ligase.